Here is a 472-residue protein sequence, read N- to C-terminus: ATP synthase subunit beta (472 aa).

Residue 157–164 coordinates ATP; sequence GGAGVGKT.

This sequence belongs to the ATPase alpha/beta chains family. In terms of assembly, F-type ATPases have 2 components, CF(1) - the catalytic core - and CF(0) - the membrane proton channel. CF(1) has five subunits: alpha(3), beta(3), gamma(1), delta(1), epsilon(1). CF(0) has three main subunits: a(1), b(2) and c(9-12). The alpha and beta chains form an alternating ring which encloses part of the gamma chain. CF(1) is attached to CF(0) by a central stalk formed by the gamma and epsilon chains, while a peripheral stalk is formed by the delta and b chains.

The protein localises to the cell inner membrane. The catalysed reaction is ATP + H2O + 4 H(+)(in) = ADP + phosphate + 5 H(+)(out). In terms of biological role, produces ATP from ADP in the presence of a proton gradient across the membrane. The catalytic sites are hosted primarily by the beta subunits. The protein is ATP synthase subunit beta of Desulfatibacillum aliphaticivorans.